Consider the following 957-residue polypeptide: MAMDRIEVKGARAHNLKNIDVTIPRDQLVVVTGLSGSGKSSLAFDTIYAEGQRRYVESLSAYARQFLGQMDKPDVDAIEGLSPAISIDQKTTSRNPRSTVGTVTEIYDYLRLLYARVGKPHCPEHGIEITSQTIEQMVDRILEYPERTKLQVLAPIVSGRKGAHVKVLEQIRKQGYVRVRIDGEMAELSDDIELEKNKKHSIEVVIDRIVVKEGVAARLSDSLETALRLGEGRVMIDVIGEEELMFSEHHACPHCGFSIGELEPRLFSFNSPFGACPTCDGLGMKLEVDADLVIPNQDLSLKENAVAPWTPISSQYYPQLLEAVCTHYGIDMDVPVKDLPKHQLDKVLYGSGDDLIYFRYENDFGQIREGEIQFEGVLRNIERRYKETGSDFIREQMEQYMSQKSCPTCKGYRLKKEALAVLIDGRHIGKITELSVADALAFFKDLTLSEKDMQIANLILREIVERLSFLDKVGLDYLTLSRAAGTLSGGEAQRIRLATQIGSRLSGVLYILDEPSIGLHQRDNDRLISALKNMRDLGNTLIVVEHDEDTMMAADYLIDIGPGAGIHGGQVISAGTPEEVMEDPNSLTGSYLSGKKFIPLPPERRKPDGRYIEIKGASENNLKKVNAKFPLGTFTAVTGVSGSGKSTLVNEILHKALAQKLHKAKAKPGSHKEIKGLDHLDKVIDIDQAPIGRTPRSNPATYTGVFDDIRDVFAQTNEAKVRGYKKGRFSFNVKGGRCEACRGDGIIKIEMHFLPDVYVPCEVCHGKRYNRETLEVTYKGKSISDVLDMTVEDALSFFENIPKIKRKLQTLYDVGLGYITLGQPATTLSGGEAQRVKLASELHKRSTGRTLYILDEPTTGLHVDDIARLLVVLQRLVDNGDTVLVIEHNLDIIKTADYIVDLGPEGGAGGGTIVASGTPEEITEVEESYTGRYLKPVIERDKTRMKSLLKAKETATS.

Position 33–40 (G33–S40) interacts with ATP. A C4-type zinc finger spans residues C252–C279. ABC transporter domains are found at residues W309 to L587 and P607 to K935. G639–S646 contacts ATP. The segment at C738–C764 adopts a C4-type zinc-finger fold.

The protein belongs to the ABC transporter superfamily. UvrA family. In terms of assembly, forms a heterotetramer with UvrB during the search for lesions.

The protein localises to the cytoplasm. In terms of biological role, the UvrABC repair system catalyzes the recognition and processing of DNA lesions. UvrA is an ATPase and a DNA-binding protein. A damage recognition complex composed of 2 UvrA and 2 UvrB subunits scans DNA for abnormalities. When the presence of a lesion has been verified by UvrB, the UvrA molecules dissociate. The sequence is that of UvrABC system protein A from Bacillus subtilis (strain 168).